The sequence spans 335 residues: MEGINLNQIGVSFKGSGSYVPNQILTNQEISKKVETSDEWIKSRTGISQRRISGLSENVSEMGYKAALGAIEMARWDIETIDLIILATSTPNDLFGSAPEIQSKLGAINAVAFDLTAACSGFLFAAITATQFLKAGSYKRAVVIGSDQLSSYVDWNDRRSCILFGDGAGAIAIEGTNELDNLLGFSMRTDGQRGSFLNLPSQNNQDLIINDINFSSGGFSSIKMNGQEVYKFAVREVPLIIDNLFKKTNFNSEKINWLLLHQANQRILDSVGERLNVSTEKILSNLSNYGNTSAATIPLMLDEAIRNKKIKENDIIATSGFGAGLSWGAALIRWG.

Catalysis depends on residues Cys119 and His261. The segment at 262–266 (QANQR) is ACP-binding. Residue Asn291 is part of the active site.

It belongs to the thiolase-like superfamily. FabH family. As to quaternary structure, homodimer.

The protein localises to the cytoplasm. It carries out the reaction malonyl-[ACP] + acetyl-CoA + H(+) = 3-oxobutanoyl-[ACP] + CO2 + CoA. It participates in lipid metabolism; fatty acid biosynthesis. Its function is as follows. Catalyzes the condensation reaction of fatty acid synthesis by the addition to an acyl acceptor of two carbons from malonyl-ACP. Catalyzes the first condensation reaction which initiates fatty acid synthesis and may therefore play a role in governing the total rate of fatty acid production. Possesses both acetoacetyl-ACP synthase and acetyl transacylase activities. Its substrate specificity determines the biosynthesis of branched-chain and/or straight-chain of fatty acids. The polypeptide is Beta-ketoacyl-[acyl-carrier-protein] synthase III (Prochlorococcus marinus subsp. pastoris (strain CCMP1986 / NIES-2087 / MED4)).